Consider the following 573-residue polypeptide: Urease subunit alpha (573 aa).

Residues histidine 139, histidine 141, and lysine 222 each contribute to the Ni(2+) site. Lysine 222 is subject to N6-carboxylysine. Position 224 (histidine 224) interacts with substrate. Ni(2+) contacts are provided by histidine 251 and histidine 277. The Proton donor role is filled by histidine 325. Aspartate 365 contacts Ni(2+).

The protein belongs to the metallo-dependent hydrolases superfamily. Urease alpha subunit family. Heterotrimer of UreA (gamma), UreB (beta) and UreC (alpha) subunits. Three heterotrimers associate to form the active enzyme. Requires Ni cation as cofactor. Carboxylation allows a single lysine to coordinate two nickel ions.

The protein localises to the cytoplasm. The catalysed reaction is urea + 2 H2O + H(+) = hydrogencarbonate + 2 NH4(+). It participates in nitrogen metabolism; urea degradation; CO(2) and NH(3) from urea (urease route): step 1/1. This is Urease subunit alpha from Flavobacterium johnsoniae (strain ATCC 17061 / DSM 2064 / JCM 8514 / BCRC 14874 / CCUG 350202 / NBRC 14942 / NCIMB 11054 / UW101) (Cytophaga johnsonae).